A 516-amino-acid chain; its full sequence is MEPAVSLAVCALLFLLWVRVKGLEFVLIHQRWVFVCLFLLPLSLIFDIYYYVRAWVVFKLSSAPRLHEQRVQDIQKQVREWKEQGSKTFMCTGRPGWLTVSLRVGKYKKTHKNIMINLMDILEVDTKKQIVRVEPLVSMGQVTALLNSIGWTLPVLPELDDLTVGGLIMGTGIESSSHKYGLFQHICTAYELILADGSFVRCTPSENSDLFYAVPWSCGTLGFLVAAEIRIIPAKKYVKLRFEPVRGLEAICEKFTHESQRLENHFVEGLLYSLDEAVIMTGVMTDDVEPSKLNSIGSYYKPWFFKHVENYLKTNREGLEYIPLRHYYHRHTRSIFWELQDIIPFGNNPIFRYLFGWMVPPKISLLKLTQGETLRKLYEQHHVVQDMLVPMKCLSQALHTFQNDIHVYPIWLCPFILPSQPGLVHPKGDEAELYVDIGAYGEPRVKHFEARSCMRQLEKFVRSVHGFQMLYADCYMNREEFWEMFDGSLYHKLRKQLGCQDAFPEVYDKICKAARH.

Residues 1–22 (MEPAVSLAVCALLFLLWVRVKG) form the signal peptide. The Lumenal segment spans residues 23-31 (LEFVLIHQR). A helical transmembrane segment spans residues 32–52 (WVFVCLFLLPLSLIFDIYYYV). The Cytoplasmic segment spans residues 53–516 (RAWVVFKLSS…YDKICKAARH (464 aa)). The FAD-binding PCMH-type domain occupies 58–234 (FKLSSAPRLH…VAAEIRIIPA (177 aa)). 163–175 (TVGGLIMGTGIES) provides a ligand contact to FAD.

It belongs to the FAD-binding oxidoreductase/transferase type 4 family. Interacts with DHCR7; this interaction regulates DHCR7 activity. FAD serves as cofactor.

It is found in the endoplasmic reticulum membrane. The protein resides in the golgi apparatus membrane. The enzyme catalyses cholesterol + NADP(+) = desmosterol + NADPH + H(+). The catalysed reaction is lanosterol + NADPH + H(+) = 24,25-dihydrolanosterol + NADP(+). It carries out the reaction 5alpha-cholest-8-en-3beta-ol + NADP(+) = zymosterol + NADPH + H(+). The protein operates within steroid biosynthesis; cholesterol biosynthesis. Its function is as follows. Catalyzes the reduction of the delta-24 double bond of sterol intermediates during cholesterol biosynthesis. In addition to its cholesterol-synthesizing activity, can protect cells from oxidative stress by reducing caspase 3 activity during apoptosis induced by oxidative stress. Also protects against amyloid-beta peptide-induced apoptosis. The chain is Delta(24)-sterol reductase (Dhcr24) from Rattus norvegicus (Rat).